We begin with the raw amino-acid sequence, 382 residues long: tRNA (guanine-N(7)-)-methyltransferase non-catalytic subunit wuho (382 aa).

Residues Val40–Ala59 are disordered. Residues Pro49–Ala59 are compositionally biased toward polar residues. 2 WD repeats span residues Gly149–Cys190 and Gly192–Lys230.

Belongs to the WD repeat TRM82 family. As to quaternary structure, forms a heterodimer with the catalytic subunit.

The protein resides in the nucleus. It participates in tRNA modification; N(7)-methylguanine-tRNA biosynthesis. Its function is as follows. Required for the formation of N(7)-methylguanine at position 46 (m7G46) in tRNA. In the complex, it is required to stabilize and induce conformational changes of the catalytic subunit. This is tRNA (guanine-N(7)-)-methyltransferase non-catalytic subunit wuho from Anopheles gambiae (African malaria mosquito).